The sequence spans 196 residues: uncharacterized protein (196 aa).

This is an uncharacterized protein from Methanocaldococcus jannaschii (strain ATCC 43067 / DSM 2661 / JAL-1 / JCM 10045 / NBRC 100440) (Methanococcus jannaschii).